The chain runs to 151 residues: uncharacterized protein (151 aa).

Positions 1–24 (MYYSIIIACLVLLLCLVIYVGHRA) are cleaved as a signal peptide.

Belongs to the asfivirus EP152R family.

The protein resides in the virion. This is an uncharacterized protein from Ornithodoros (relapsing fever ticks).